The following is a 227-amino-acid chain: DNA repair protein RecO (227 aa).

The protein belongs to the RecO family.

Functionally, involved in DNA repair and RecF pathway recombination. This is DNA repair protein RecO from Pseudomonas entomophila (strain L48).